We begin with the raw amino-acid sequence, 454 residues long: Ribosomal protein uS12 methylthiotransferase RimO (454 aa).

The region spanning 14–125 (SKVAFSHVGC…IAKVLDRVEK (112 aa)) is the MTTase N-terminal domain. [4Fe-4S] cluster is bound by residues Cys23, Cys59, Cys88, Cys163, Cys167, and Cys170. Residues 149–378 (DKNKFVAYLR…ISVQQNISKD (230 aa)) enclose the Radical SAM core domain. Residues 381-452 (QSYVGSKMKI…EYDLYGETIK (72 aa)) enclose the TRAM domain.

Belongs to the methylthiotransferase family. RimO subfamily. [4Fe-4S] cluster is required as a cofactor.

The protein localises to the cytoplasm. It carries out the reaction L-aspartate(89)-[ribosomal protein uS12]-hydrogen + (sulfur carrier)-SH + AH2 + 2 S-adenosyl-L-methionine = 3-methylsulfanyl-L-aspartate(89)-[ribosomal protein uS12]-hydrogen + (sulfur carrier)-H + 5'-deoxyadenosine + L-methionine + A + S-adenosyl-L-homocysteine + 2 H(+). In terms of biological role, catalyzes the methylthiolation of an aspartic acid residue of ribosomal protein uS12. This Prochlorococcus marinus (strain MIT 9312) protein is Ribosomal protein uS12 methylthiotransferase RimO.